A 583-amino-acid polypeptide reads, in one-letter code: MMLSLPKLSAGGVVVLLATLLHTLTVQGASVRHHRLRGGDQGGFLAPSSDMIKALEYIESLKQRADGPESPTGDYDEVDKFRFLVQLASLQDENTPTHEDATRWPDNKVPQWVRSLLRVLDQAGESPESQAAGNERRLHKTRRPVADGESPAGDYAGFVKPHKKYPLMFEDEENGRDNKRATEDLDEQYTPQSLANMRSIFEELGKLSAAQKRDDEEDGEDDDDLYRVRNAAYEDVTGGEEWVPLEEQLETEELVKGSHEEYKRALGDISEQGMENMERRGEEEDENPDDDTKLVDYYLLKVLEMTDQAQKRDLMEGRRRLLSRPSLIDPRAIKQLLSAISMKLQVPPEDLVGMLFMEETRKQQQRLPEPQLARNPSQPRYKSRVIKYYNGRQPEVTVSDIPHDVKTEDILKVLGLGNLANKNAKFSLLKQRPYKTAMTNYFNPNGRRGSLFLSELNKAPSKRKDDYDDDDAVDEDEESTFLAAKLLTEYPDTSSSNRKRAIDSAANGQLPYELYEEAMKDFFDQVDNGKSALAKRDTQGKEEPEGPQKPPAQDPAQETVDQTPPESGTEDGKEYHGKIVAGM.

The signal sequence occupies residues 1-28 (MMLSLPKLSAGGVVVLLATLLHTLTVQG). Disordered regions lie at residues 123 to 159 (AGES…AGFV) and 526 to 583 (VDNG…VAGM). The segment covering 534–546 (AKRDTQGKEEPEG) has biased composition (basic and acidic residues).

The protein belongs to the chromogranin/secretogranin protein family.

It localises to the secreted. Its function is as follows. Neuroendocrine protein of the granin family that regulates the biogenesis of secretory granules. Required for neurovascular modeling of the hindbrain. Acts in a non-cell autonomous manner and is required for migration and proliferation of central artery endothelial cells. Required for normal courting behavior and spawning. The chain is Secretogranin-2b from Danio rerio (Zebrafish).